Reading from the N-terminus, the 127-residue chain is Putative lipoprotein LprJ (127 aa).

A signal peptide spans 1–34; sequence MTAHTHDGTRTWRTGRQATTLLALLAGVFGGAAS. The N-palmitoyl cysteine moiety is linked to residue cysteine 35. Residue cysteine 35 is the site of S-diacylglycerol cysteine attachment. Residues 35-99 are Extracellular-facing; sequence CAAPIQADMM…MAEINGMSRD (65 aa). A helical membrane pass occupies residues 100–120; the sequence is MASTFTIVAIGTYCPAVIAPL. The Cytoplasmic portion of the chain corresponds to 121–127; sequence MPNRLQA.

In terms of assembly, may interact with sensor protein KdpD. Modified by Lgt on Cys-35 with an S-linked diacylglycerol, signal peptide is removed by LspA, modified by Lnt with amide-linked fatty acid.

The protein localises to the cell membrane. Functionally, overexpression induces expression of sensor protein kdpD gene at low K(+) concentrations (0 and 250 uM, tested in M.smegatis). The chain is Putative lipoprotein LprJ (lprJ) from Mycobacterium tuberculosis (strain ATCC 25618 / H37Rv).